We begin with the raw amino-acid sequence, 818 residues long: FAD-dependent monooxygenase anuJ (818 aa).

5 residues coordinate FAD: Glu-46, Ala-60, Arg-122, Asp-329, and Gly-342. 3 consecutive transmembrane segments (helical) span residues 471–491 (VLWA…MFSV), 539–559 (FFYQ…IMLV), and 571–591 (LSFA…FVPI). Residue Asn-614 is glycosylated (N-linked (GlcNAc...) asparagine). The next 2 helical transmembrane spans lie at 621–641 (ILPV…LSPV) and 647–667 (AAGF…AGLA). Asn-683 carries N-linked (GlcNAc...) asparagine glycosylation. 2 consecutive transmembrane segments (helical) span residues 743–763 (WDQV…FADL) and 778–798 (FSAL…LMWL).

Belongs to the paxM FAD-dependent monooxygenase family.

It is found in the membrane. Highly reducing polyketide synthase; part of the gene cluster that mediates the biosynthesis of annullatin D, an alkylated aromatic polyketide with a fused dihydrobenzofuran lactone ring system that exhibits potent agonistic activities toward the cannabinoid receptors. AnuJ does not seem to play a role within the pathway. The annullatin backbone 2-hydroxymethyl-3-pentylphenol is assembled from one acetyl-CoA starter unit and 5 malonyl-CoA elongation units by cooperation of the highly reducing polyketide synthase anuA, the short-chain dehydrogenase anuB and the oxidoreductase anuC, before being hydroxylated at the C-5 alkyl chain by the cytochrome P450 monooxygenase anuE to form (8S)-annullatin E. The prenyltransferase anuH subsequently installs one isoprenyl group at the benzene ring to form (8S)-annullatin J. Enzymatic or nonenzymatic dihydro-benzofuran ring formation between the prenyl and the phenolic hydroxyl groups in (8S)-annullatin J results in two diastereomers (2S,9S)-annullatin H and compound 12. The intermediate (2S,9S)-annullatin H is then converted to (2S,9S)-annullatin D by the FAD-linked oxidoreductase anuG-catalyzed five-member lactone ring formation. The isomer 12 acts as a substrate for the short-chain dehydrogenase anuF and is oxidized to (2R)-annullatin F, which is subsequently acetylated by an acetyltransferase leading to (2R)-annullatin G formation. The remaining enzymes identified within the cluster, anuD, anuI and anuJ, seem not to be involved in annullatin biosynthesis. In Penicillium roqueforti (strain FM164), this protein is FAD-dependent monooxygenase anuJ.